The chain runs to 292 residues: ATP synthase gamma chain (292 aa).

The protein belongs to the ATPase gamma chain family. F-type ATPases have 2 components, CF(1) - the catalytic core - and CF(0) - the membrane proton channel. CF(1) has five subunits: alpha(3), beta(3), gamma(1), delta(1), epsilon(1). CF(0) has three main subunits: a, b and c.

It is found in the cell membrane. Its function is as follows. Produces ATP from ADP in the presence of a proton gradient across the membrane. The gamma chain is believed to be important in regulating ATPase activity and the flow of protons through the CF(0) complex. The protein is ATP synthase gamma chain of Streptococcus pneumoniae (strain JJA).